Here is a 69-residue protein sequence, read N- to C-terminus: uncharacterized protein (69 aa).

The N-terminal stretch at 1–16 is a signal peptide; sequence MSLGLIFALLLTHAAA.

This is an uncharacterized protein from Archaeoglobus fulgidus (strain ATCC 49558 / DSM 4304 / JCM 9628 / NBRC 100126 / VC-16).